The chain runs to 274 residues: 4-deoxy-L-threo-5-hexosulose-uronate ketol-isomerase (274 aa).

4 residues coordinate Zn(2+): histidine 192, histidine 194, glutamate 199, and histidine 241.

The protein belongs to the KduI family. Requires Zn(2+) as cofactor.

The enzyme catalyses 5-dehydro-4-deoxy-D-glucuronate = 3-deoxy-D-glycero-2,5-hexodiulosonate. The protein operates within glycan metabolism; pectin degradation; 2-dehydro-3-deoxy-D-gluconate from pectin: step 4/5. Catalyzes the isomerization of 5-dehydro-4-deoxy-D-glucuronate to 3-deoxy-D-glycero-2,5-hexodiulosonate. The sequence is that of 4-deoxy-L-threo-5-hexosulose-uronate ketol-isomerase from Shigella boydii serotype 18 (strain CDC 3083-94 / BS512).